We begin with the raw amino-acid sequence, 408 residues long: Endo-1,4-beta-xylanase A (408 aa).

Positions 1-19 (MKLSASFAALALLLPFVQA) are cleaved as a signal peptide. Residues 20-55 (QSPVWGQCGGIGWTGPTTCTAGNVCQEYSAYYSQCI) enclose the CBM1 domain. Positions 64–89 (TSVSTAPNPPPTSHTSTSSAPSGAST) are disordered. Residues 76–89 (SHTSTSSAPSGAST) show a composition bias toward low complexity. The GH10 domain maps to 88-405 (STSTAKLNTL…KPAYDGIAIG (318 aa)). The active-site Proton donor is Glu222. Glu327 (nucleophile) is an active-site residue. Cysteines 355 and 361 form a disulfide.

It belongs to the glycosyl hydrolase 10 (cellulase F) family.

It is found in the secreted. The catalysed reaction is Endohydrolysis of (1-&gt;4)-beta-D-xylosidic linkages in xylans.. It functions in the pathway glycan degradation; xylan degradation. Functionally, endo-1,4-beta-xylanase involved in the hydrolysis of xylan, a major structural heterogeneous polysaccharide found in plant biomass representing the second most abundant polysaccharide in the biosphere, after cellulose. The chain is Endo-1,4-beta-xylanase A (xynA) from Phanerodontia chrysosporium (White-rot fungus).